A 95-amino-acid polypeptide reads, in one-letter code: uncharacterized protein (95 aa).

A signal peptide spans 1–22 (MLPGFTMIITSLLLTFFREVEH). The Extracellular portion of the chain corresponds to 23 to 52 (LLPECLTITNTPQRTLVLIQRFTLLQKVMT). The chain crosses the membrane as a helical span at residues 53 to 69 (IHLLLSIGTLGSLFTLH). At 70–95 (PQLLKTNLLQKLHKELNSNLDYLISC) the chain is on the cytoplasmic side.

It localises to the host membrane. This is an uncharacterized protein from Acidianus bottle-shaped virus (isolate Italy/Pozzuoli) (ABV).